The sequence spans 429 residues: Histidine--tRNA ligase (429 aa).

Belongs to the class-II aminoacyl-tRNA synthetase family. Homodimer.

It is found in the cytoplasm. The catalysed reaction is tRNA(His) + L-histidine + ATP = L-histidyl-tRNA(His) + AMP + diphosphate + H(+). The sequence is that of Histidine--tRNA ligase from Streptococcus pneumoniae (strain CGSP14).